A 385-amino-acid chain; its full sequence is Galactokinase (385 aa).

34-37 (EHTD) serves as a coordination point for substrate. 124 to 130 (SSGLSSS) is an ATP binding site. Residues Ser-130 and Glu-162 each coordinate Mg(2+). Asp-174 serves as the catalytic Proton acceptor. A substrate-binding site is contributed by Tyr-223.

Belongs to the GHMP kinase family. GalK subfamily.

It is found in the cytoplasm. It carries out the reaction alpha-D-galactose + ATP = alpha-D-galactose 1-phosphate + ADP + H(+). The protein operates within carbohydrate metabolism; galactose metabolism. Functionally, catalyzes the transfer of the gamma-phosphate of ATP to D-galactose to form alpha-D-galactose-1-phosphate (Gal-1-P). The sequence is that of Galactokinase from Actinobacillus succinogenes (strain ATCC 55618 / DSM 22257 / CCUG 43843 / 130Z).